Reading from the N-terminus, the 873-residue chain is V-type proton ATPase 116 kDa subunit a 2 (873 aa).

The Cytoplasmic portion of the chain corresponds to 1-407 (MGSLSRSEEM…TIITFPFLFS (407 aa)). Residues 408-428 (CMFGDLGHGCIMLMAGLWFVL) traverse the membrane as a helical segment. Topologically, residues 429-445 (REKNLQARNIKDEIFNM) are lumenal. The helical transmembrane segment at 446-466 (FFGGRYIILLMGLFSIHAGII) threads the bilayer. The Cytoplasmic segment spans residues 467–543 (YNDMFAKSFN…NKLNFLNSMK (77 aa)). The chain crosses the membrane as a helical span at residues 544 to 564 (MKLSVILGISQMTFGVILSFF). Asparagine 565 and asparagine 569 each carry an N-linked (GlcNAc...) asparagine glycan. The Lumenal segment spans residues 565–574 (NHTYNKSKID). The chain crosses the membrane as a helical span at residues 575 to 595 (IFTVFIPQMLFMGCIFMYLCL). Residues 596 to 614 (QIILKWLFFWTKEATVFGQ) lie on the Cytoplasmic side of the membrane. A helical membrane pass occupies residues 615-635 (IYPGSHCAPSLLIGLINMFMM). The Lumenal portion of the chain corresponds to 636–668 (KDRNAGFVVDGGKVNGEYREVETCYLSQWYPGQ). Residues 669–689 (SVIEMILVVIAVICVPVMLFG) traverse the membrane as a helical segment. Topologically, residues 690–785 (KPIHHVMQQK…LWALSLAHAQ (96 aa)) are cytoplasmic. The chain crosses the membrane as a helical span at residues 786–806 (LSEVLWHMVFVTGGLGISGTA). A topological domain (lumenal) is located at residue glycine 807. Residues 808–828 (FIAVYVVFFIFFVLTISILVL) traverse the membrane as a helical segment. Over 829–873 (MEGLSAFLHTLRLHWVEFQSKFYLGLGYPFVPYSFKTALQEAEAA) the chain is Cytoplasmic.

It belongs to the V-ATPase 116 kDa subunit family. As to quaternary structure, V-ATPase is a heteromultimeric enzyme made up of two complexes: the ATP-hydrolytic V1 complex and the proton translocation V0 complex. The V1 complex consists of three catalytic AB heterodimers that form a heterohexamer, three peripheral stalks each consisting of EG heterodimers, one central rotor including subunits D and F, and the regulatory subunits C and H. The proton translocation complex V0 consists of the proton transport subunit a, a ring of proteolipid subunits c9c'', rotary subunit d, subunits e and f, and the accessory subunits vah-19/Ac45 and vah-20/PRR. Interacts with V-type proton ATPase subunit C vha-11. Expressed in the H-shaped excretory cell (at protein level). Expressed in hypodermal cells around the vulva. Expressed in the main epidermal syncytium. Expressed in the sheath cells associated with head and tail sensory organs; specifically, expressed in the apical sheath cells of the amphids and CEP neuron and in the sheath cells of the OLQ sensory organ.

It is found in the apical cell membrane. It localises to the endosome. Its subcellular location is the multivesicular body membrane. Subunit of the V0 complex of vacuolar(H+)-ATPase (V-ATPase), a multisubunit enzyme composed of a peripheral complex (V1) that hydrolyzes ATP and a membrane integral complex (V0) that translocates protons. V-ATPase is responsible for acidifying and maintaining the pH of intracellular compartments and in some cell types, is targeted to the plasma membrane, where it is responsible for acidifying the extracellular environment. Involved in the assembly of the V-ATPase complex. The V-ATPase is required for the function of the excretory canal. Independently of the V1 complex, the V0 complex of the V-ATPase is required for multivesicular body membrane fusion with the apical membrane of the epidermal cells during exosome release and thus regulates the release of cuticle components such as Hedgehog-related peptide wrt-2 but not collagen. Also, in the epidermis, regulates the trafficking of che-14 and rdy-2. Regulates the secretion of granular material found in the amphid channel and in controlling osmoregulation in the amphid pocket. The polypeptide is V-type proton ATPase 116 kDa subunit a 2 (Caenorhabditis elegans).